The sequence spans 137 residues: Small ribosomal subunit protein uS12 (137 aa).

At Asp-102 the chain carries 3-methylthioaspartic acid.

The protein belongs to the universal ribosomal protein uS12 family. Part of the 30S ribosomal subunit. Contacts proteins S8 and S17. May interact with IF1 in the 30S initiation complex.

With S4 and S5 plays an important role in translational accuracy. In terms of biological role, interacts with and stabilizes bases of the 16S rRNA that are involved in tRNA selection in the A site and with the mRNA backbone. Located at the interface of the 30S and 50S subunits, it traverses the body of the 30S subunit contacting proteins on the other side and probably holding the rRNA structure together. The combined cluster of proteins S8, S12 and S17 appears to hold together the shoulder and platform of the 30S subunit. This chain is Small ribosomal subunit protein uS12, found in Mesoplasma florum (strain ATCC 33453 / NBRC 100688 / NCTC 11704 / L1) (Acholeplasma florum).